A 600-amino-acid polypeptide reads, in one-letter code: Protein GPR107 (600 aa).

The signal sequence occupies residues 1–39; the sequence is MAALAPVGSPASRGPRLAAGLRLLPMLGLLQLLAEPGLG. Residues 40–263 are Extracellular-facing; that stretch reads RVHHLALKDD…YLSAGEIPLP (224 aa). N-linked (GlcNAc...) asparagine glycosylation is found at asparagine 70 and asparagine 169. The cysteines at positions 109 and 228 are disulfide-linked. Residues 157–175 show a composition bias toward polar residues; it reads SQEPNVNPASAGNQTQKTQ. Residues 157–185 are disordered; the sequence is SQEPNVNPASAGNQTQKTQDGGKSKRSTV. Basic and acidic residues predominate over residues 176-185; the sequence is DGGKSKRSTV. N-linked (GlcNAc...) asparagine glycosylation occurs at asparagine 211. A helical membrane pass occupies residues 264–284; that stretch reads KLYISMAFFFFLSGTIWIHIL. At 285-293 the chain is on the cytoplasmic side; sequence RKRRNDVFK. Residues 294–314 traverse the membrane as a helical segment; sequence IHWLMAALPFTKSLSLVFHAI. Over 315 to 337 the chain is Extracellular; sequence DYHYISSQGFPIEGWAVVYYITH. Residues 338–358 traverse the membrane as a helical segment; it reads LLKGALLFITIALIGTGWAFI. The Cytoplasmic segment spans residues 359 to 368; it reads KHILSDKDKK. A helical membrane pass occupies residues 369–389; it reads IFMIVIPLQVLANVAYIIIES. Residues 390 to 402 are Extracellular-facing; it reads TEEGTTEYGLWKD. A helical membrane pass occupies residues 403–423; it reads SLFLVDLLCCGAILFPVVWSI. The Cytoplasmic segment spans residues 424–498; that stretch reads RHLQEASATD…AKLKLFRHYY (75 aa). A helical membrane pass occupies residues 499–519; that stretch reads VLIVCYIYFTRIIAFLLKLAV. Topologically, residues 520 to 524 are extracellular; that stretch reads PFQWK. The chain crosses the membrane as a helical span at residues 525 to 544; sequence WLYQLLDETATLVFFVLTGY. The Cytoplasmic segment spans residues 545-600; the sequence is KFRPASDNPYLQLSQEEEDLEMESVVTTSGVMESMKKVKKVTNGSVEPQGEWEGAV.

Belongs to the LU7TM family. Cleaved by FURIN to yield two fragments of 17 and 35 kDa that remain associated via a disulfide bond.

The protein resides in the cell membrane. It localises to the golgi apparatus. It is found in the trans-Golgi network membrane. In terms of biological role, has been proposed to act as a receptor for neuronostatin, a peptide derived from the somatostatin/SST precursor. Involved in blood sugar regulation through the induction of glucagon in response to low glucose. (Microbial infection) Required for intoxication by Pseudomonas aeruginosa exotoxin A and Campylobacter jejuni CDT. May contribute to the retrograde transport of bacterial toxins, including cholera toxin, from the trans-Golgi network to the endoplasmic reticulum. This Homo sapiens (Human) protein is Protein GPR107 (GPR107).